The following is a 304-amino-acid chain: UDP-N-acetylenolpyruvoylglucosamine reductase (304 aa).

Residues 28–193 (KTGGPADYLA…LTATFALTPG (166 aa)) form the FAD-binding PCMH-type domain. Arg172 is an active-site residue. The active-site Proton donor is the Ser222. Glu292 is a catalytic residue.

This sequence belongs to the MurB family. Requires FAD as cofactor.

It localises to the cytoplasm. The enzyme catalyses UDP-N-acetyl-alpha-D-muramate + NADP(+) = UDP-N-acetyl-3-O-(1-carboxyvinyl)-alpha-D-glucosamine + NADPH + H(+). It functions in the pathway cell wall biogenesis; peptidoglycan biosynthesis. In terms of biological role, cell wall formation. The polypeptide is UDP-N-acetylenolpyruvoylglucosamine reductase (Levilactobacillus brevis (strain ATCC 367 / BCRC 12310 / CIP 105137 / JCM 1170 / LMG 11437 / NCIMB 947 / NCTC 947) (Lactobacillus brevis)).